The chain runs to 219 residues: Vesicle-associated membrane protein 711 (219 aa).

The residue at position 2 (Ala-2) is an N-acetylalanine. Residues 2-189 (AILYALVARG…RSNVWWRNCK (188 aa)) are Cytoplasmic-facing. The region spanning 7 to 111 (LVARGTVVLS…AMNEEFSRVL (105 aa)) is the Longin domain. In terms of domain architecture, v-SNARE coiled-coil homology spans 126–186 (RINRIKGEMN…RRFRSNVWWR (61 aa)). The chain crosses the membrane as a helical; Anchor for type IV membrane protein span at residues 190-210 (LTVLLILLLLVIIYIAVAFLC). At 211–219 (HGPTLPSCI) the chain is on the vesicular side.

This sequence belongs to the synaptobrevin family. Expressed in flowers, leaves, stems and roots.

The protein resides in the vacuole membrane. Its subcellular location is the prevacuolar compartment membrane. In terms of biological role, involved in the targeting and/or fusion of transport vesicles to their target membrane. The protein is Vesicle-associated membrane protein 711 of Arabidopsis thaliana (Mouse-ear cress).